The chain runs to 414 residues: Ankyrin repeat domain-containing protein 10 (414 aa).

5 ANK repeats span residues 18–47 (TLRF…RSDL), 54–83 (YGWT…SVNA), 88–117 (FAQT…NINK), 121–150 (VGET…QIDL), and 154–187 (SGLT…RYYS). The interval 310–332 (GVTSPSRHRIHTSNGTEEPEKAM) is disordered.

The protein is Ankyrin repeat domain-containing protein 10 (ANKRD10) of Gallus gallus (Chicken).